The sequence spans 258 residues: Glutamate racemase (258 aa).

Residues 11–12 (DS) and 43–44 (YG) contribute to the substrate site. Cysteine 74 serves as the catalytic Proton donor/acceptor. 75–76 (NT) is a binding site for substrate. The Proton donor/acceptor role is filled by cysteine 187. Residue 188–189 (TH) participates in substrate binding.

The protein belongs to the aspartate/glutamate racemases family.

The catalysed reaction is L-glutamate = D-glutamate. It functions in the pathway cell wall biogenesis; peptidoglycan biosynthesis. Provides the (R)-glutamate required for cell wall biosynthesis. The protein is Glutamate racemase of Bifidobacterium animalis subsp. lactis (strain AD011).